The following is a 288-amino-acid chain: Bifunctional protein FolD (288 aa).

Residues 166-168 and isoleucine 232 each bind NADP(+); that span reads GAS.

It belongs to the tetrahydrofolate dehydrogenase/cyclohydrolase family. Homodimer.

It carries out the reaction (6R)-5,10-methylene-5,6,7,8-tetrahydrofolate + NADP(+) = (6R)-5,10-methenyltetrahydrofolate + NADPH. It catalyses the reaction (6R)-5,10-methenyltetrahydrofolate + H2O = (6R)-10-formyltetrahydrofolate + H(+). It functions in the pathway one-carbon metabolism; tetrahydrofolate interconversion. Its function is as follows. Catalyzes the oxidation of 5,10-methylenetetrahydrofolate to 5,10-methenyltetrahydrofolate and then the hydrolysis of 5,10-methenyltetrahydrofolate to 10-formyltetrahydrofolate. This chain is Bifunctional protein FolD, found in Escherichia coli (strain SMS-3-5 / SECEC).